The sequence spans 243 residues: PF03932 family protein CutC (243 aa).

This sequence belongs to the CutC family.

It localises to the cytoplasm. The protein is PF03932 family protein CutC of Parabacteroides distasonis (strain ATCC 8503 / DSM 20701 / CIP 104284 / JCM 5825 / NCTC 11152).